The primary structure comprises 156 residues: MKCRLIATGERAPSWVAQGFAEYQKRLSHWMPLELVEIEPGMRGKGRDAQRATDDEGRRVLAALPKNAYVVALDVPGRPLSSEQLAQRMEHWRGQGRDLAFLIGGPEGHAAEVLKSASESWSIGPLTLPHMLVRLIVAEQLYRAAAMLANHPYHRA.

Residues Leu73, Gly104, and 123-128 each bind S-adenosyl-L-methionine; that span reads IGPLTL.

Belongs to the RNA methyltransferase RlmH family. In terms of assembly, homodimer.

The protein localises to the cytoplasm. The enzyme catalyses pseudouridine(1915) in 23S rRNA + S-adenosyl-L-methionine = N(3)-methylpseudouridine(1915) in 23S rRNA + S-adenosyl-L-homocysteine + H(+). Its function is as follows. Specifically methylates the pseudouridine at position 1915 (m3Psi1915) in 23S rRNA. The protein is Ribosomal RNA large subunit methyltransferase H of Xanthomonas axonopodis pv. citri (strain 306).